Here is a 432-residue protein sequence, read N- to C-terminus: Glutamyl-tRNA reductase (432 aa).

Substrate is bound by residues threonine 49–arginine 52, serine 107, glutamate 112–glutamine 114, and glutamine 118. Catalysis depends on cysteine 50, which acts as the Nucleophile. Glycine 186–glycine 191 contributes to the NADP(+) binding site.

The protein belongs to the glutamyl-tRNA reductase family. As to quaternary structure, homodimer.

It carries out the reaction (S)-4-amino-5-oxopentanoate + tRNA(Glu) + NADP(+) = L-glutamyl-tRNA(Glu) + NADPH + H(+). It participates in porphyrin-containing compound metabolism; protoporphyrin-IX biosynthesis; 5-aminolevulinate from L-glutamyl-tRNA(Glu): step 1/2. Catalyzes the NADPH-dependent reduction of glutamyl-tRNA(Glu) to glutamate 1-semialdehyde (GSA). The polypeptide is Glutamyl-tRNA reductase (Campylobacter jejuni subsp. jejuni serotype O:6 (strain 81116 / NCTC 11828)).